A 327-amino-acid polypeptide reads, in one-letter code: Malate dehydrogenase (327 aa).

12–18 (GAAGQIG) serves as a coordination point for NAD(+). Positions 93 and 99 each coordinate substrate. Residues Asn106, Gln113, and 130–132 (VGN) contribute to the NAD(+) site. Asn132 and Arg163 together coordinate substrate. His188 acts as the Proton acceptor in catalysis.

It belongs to the LDH/MDH superfamily. MDH type 2 family.

The catalysed reaction is (S)-malate + NAD(+) = oxaloacetate + NADH + H(+). Its function is as follows. Catalyzes the reversible oxidation of malate to oxaloacetate. The chain is Malate dehydrogenase from Cupriavidus pinatubonensis (strain JMP 134 / LMG 1197) (Cupriavidus necator (strain JMP 134)).